Here is a 203-residue protein sequence, read N- to C-terminus: Holliday junction branch migration complex subunit RuvA (203 aa).

The interval 1-64 (MIGRLRGIIL…EDAQLLYGFN (64 aa)) is domain I. The segment at 65-142 (NKQERTLFKE…KGLHGDLFTP (78 aa)) is domain II. The segment at 143-154 (AVDLVLTSPASP) is flexible linker. Residues 155–203 (GSEDAEQEAVAALVALGYKPQEASRMVSKIARPDASSETLIRDALRAAL) form a domain III region.

It belongs to the RuvA family. As to quaternary structure, homotetramer. Forms an RuvA(8)-RuvB(12)-Holliday junction (HJ) complex. HJ DNA is sandwiched between 2 RuvA tetramers; dsDNA enters through RuvA and exits via RuvB. An RuvB hexamer assembles on each DNA strand where it exits the tetramer. Each RuvB hexamer is contacted by two RuvA subunits (via domain III) on 2 adjacent RuvB subunits; this complex drives branch migration. In the full resolvosome a probable DNA-RuvA(4)-RuvB(12)-RuvC(2) complex forms which resolves the HJ.

It localises to the cytoplasm. In terms of biological role, the RuvA-RuvB-RuvC complex processes Holliday junction (HJ) DNA during genetic recombination and DNA repair, while the RuvA-RuvB complex plays an important role in the rescue of blocked DNA replication forks via replication fork reversal (RFR). RuvA specifically binds to HJ cruciform DNA, conferring on it an open structure. The RuvB hexamer acts as an ATP-dependent pump, pulling dsDNA into and through the RuvAB complex. HJ branch migration allows RuvC to scan DNA until it finds its consensus sequence, where it cleaves and resolves the cruciform DNA. This is Holliday junction branch migration complex subunit RuvA from Salmonella schwarzengrund (strain CVM19633).